The following is a 531-amino-acid chain: UDP-glucuronosyltransferase 1A6 (531 aa).

The signal sequence occupies residues 1–26 (MACLLPAAQTLPAGFLFLVLWASVLG). Residues N293 and N431 are each glycosylated (N-linked (GlcNAc...) asparagine). A helical transmembrane segment spans residues 489–505 (VIGFLLAIVLTVVFIVF).

It belongs to the UDP-glycosyltransferase family. In terms of tissue distribution, expressed in liver, kidney and at very low levels in colon.

Its subcellular location is the microsome. The protein localises to the endoplasmic reticulum membrane. It carries out the reaction glucuronate acceptor + UDP-alpha-D-glucuronate = acceptor beta-D-glucuronoside + UDP + H(+). The catalysed reaction is (5Z,8Z,11Z,14Z)-eicosatetraenoate + UDP-alpha-D-glucuronate = O-[(5Z),(8Z),(11Z),(14Z)-eicosatetraenoyl]-beta-D-glucuronate + UDP. The enzyme catalyses 15-hydroxy-(5Z,8Z,11Z,13E)-eicosatetraenoate + UDP-alpha-D-glucuronate = 15-O-(beta-D-glucuronosyl)-(5Z,8Z,11Z,14Z)-eicosatetraenoate + UDP + H(+). It catalyses the reaction (E)-ferulate + UDP-alpha-D-glucuronate = (E)-4-O-(beta-D-glucuronosyl)-ferulate + UDP + H(+). It carries out the reaction (E)-ferulate + UDP-alpha-D-glucuronate = (E)-ferulic acid beta-D-glucuronate ester + UDP. Its function is as follows. UDP-glucuronosyltransferase (UGT) that catalyzes phase II biotransformation reactions in which lipophilic substrates are conjugated with glucuronic acid to facilitate their inactivation and excretion from the body. Essential for the elimination and detoxification of drugs, xenobiotics and endogenous compounds. Involved in the glucuronidation of arachidonic acid (AA) and AA-derived eicosanoids including 15-HETE and 20-HETE. Conjugates small planar phenolic molecules such as 4-nitrophenol, 1-naphthol, and 4-methylumbelliferone. The bulky phenol 4-hydroxybiphenyl, androgens and estrogens are not substrates. 2-hydroxybiphenyl is an excellent substrate. Involved in the glucuronidation of the phytochemical ferulic acid at the phenolic or the carboxylic acid group. The polypeptide is UDP-glucuronosyltransferase 1A6 (Mus musculus (Mouse)).